The following is a 733-amino-acid chain: 1,4-alpha-glucan branching enzyme GlgB (733 aa).

The Nucleophile role is filled by D413. E466 (proton donor) is an active-site residue.

This sequence belongs to the glycosyl hydrolase 13 family. GlgB subfamily. Monomer.

It catalyses the reaction Transfers a segment of a (1-&gt;4)-alpha-D-glucan chain to a primary hydroxy group in a similar glucan chain.. Its pathway is glycan biosynthesis; glycogen biosynthesis. In terms of biological role, catalyzes the formation of the alpha-1,6-glucosidic linkages in glycogen by scission of a 1,4-alpha-linked oligosaccharide from growing alpha-1,4-glucan chains and the subsequent attachment of the oligosaccharide to the alpha-1,6 position. The polypeptide is 1,4-alpha-glucan branching enzyme GlgB (Leifsonia xyli subsp. xyli (strain CTCB07)).